A 212-amino-acid polypeptide reads, in one-letter code: N-(5'-phosphoribosyl)anthranilate isomerase (212 aa).

The protein belongs to the TrpF family.

It catalyses the reaction N-(5-phospho-beta-D-ribosyl)anthranilate = 1-(2-carboxyphenylamino)-1-deoxy-D-ribulose 5-phosphate. It functions in the pathway amino-acid biosynthesis; L-tryptophan biosynthesis; L-tryptophan from chorismate: step 3/5. The polypeptide is N-(5'-phosphoribosyl)anthranilate isomerase (Myxococcus xanthus (strain DK1622)).